We begin with the raw amino-acid sequence, 337 residues long: Leucine-rich repeat-containing protein 39 (337 aa).

LRR repeat units follow at residues 84 to 105 (QLQE…IGRF), 107 to 128 (HLIV…IGLL), 130 to 152 (RLQE…SNCT), 153 to 176 (SLEK…SKLL), 177 to 198 (KLTH…VLDM), 200 to 221 (ALEW…LDRM), 223 to 244 (SLHT…IKNM), 246 to 267 (NLGT…MEEM), and 269 to 290 (NLRF…PPSD).

As to quaternary structure, interacts with MYH7 (via C-terminus). As to expression, expressed in heart and skeletal muscle.

Its subcellular location is the cytoplasm. The protein localises to the myofibril. The protein resides in the sarcomere. It localises to the m line. Component of the sarcomeric M-band which plays a role in myocyte response to biomechanical stress. May regulate expression of other M-band proteins via an SRF-dependent pathway. Important for normal contractile function in heart. The chain is Leucine-rich repeat-containing protein 39 from Mus musculus (Mouse).